Consider the following 140-residue polypeptide: Putative pre-16S rRNA nuclease (140 aa).

The protein belongs to the YqgF nuclease family.

The protein localises to the cytoplasm. Functionally, could be a nuclease involved in processing of the 5'-end of pre-16S rRNA. The sequence is that of Putative pre-16S rRNA nuclease from Vibrio vulnificus (strain YJ016).